Reading from the N-terminus, the 389-residue chain is Aspartic protease pepA (389 aa).

The signal sequence occupies residues 1-20; sequence MVLINQLGAVLAVCATLTVA. The propeptide at 21–67 is activation peptide; sequence APTKGKARFNVPQVAIPKKMVHHPAVSYARALHKFGMKVPKTVQDAA. Positions 82–386 constitute a Peptidase A1 domain; sequence YVTQVTVGEG…DTQGPRIGFA (305 aa). Asp98 is a catalytic residue. Asn257 carries an N-linked (GlcNAc...) asparagine glycan. Asp279 is an active-site residue. An intrachain disulfide couples Cys315 to Cys348.

It belongs to the peptidase A1 family. In terms of assembly, monomer.

Its subcellular location is the secreted. In terms of biological role, secreted aspartic endopeptidase that allows assimilation of proteinaceous substrates. The scissile peptide bond is attacked by a nucleophilic water molecule activated by two aspartic residues in the active site. Shows a broad primary substrate specificity. Favors hydrophobic residues at the P1 and P1' positions. The polypeptide is Aspartic protease pepA (Arthroderma otae (strain ATCC MYA-4605 / CBS 113480) (Microsporum canis)).